The sequence spans 770 residues: Semaphorin-4F (770 aa).

The signal sequence occupies residues 1-34; sequence MPASAARPRPGPGQPTASPFPLLLLAVLSGPVSG. Residues 35–659 are Extracellular-facing; the sequence is RVPRSVPRTS…RDAPSRAHTV (625 aa). One can recognise a Sema domain in the interval 42–510; it reads RTSLPISEAD…SRTEVTQVNT (469 aa). N-linked (GlcNAc...) asparagine glycosylation is present at N64. C112 and C122 are disulfide-bonded. N133 is a glycosylation site (N-linked (GlcNAc...) asparagine). 3 cysteine pairs are disulfide-bonded: C140–C149, C273–C384, and C297–C343. A glycan (N-linked (GlcNAc...) asparagine) is linked at N509. Residues 512–563 enclose the PSI domain; that stretch reads NCGRLQSCSECILAQDPVCAWSFRLDECVAHAGEHRGLVQDIESADVSSLCP. Cystine bridges form between C513-C530, C522-C539, and C587-C628. The region spanning 580–635 is the Ig-like C2-type domain; the sequence is AAHVVLPCSPSSAWASCVWHQPSGVTALTPRRDGLEVVVTPGAMGAYACECQEGGA. The helical transmembrane segment at 660–680 threads the bilayer; that stretch reads GAGLAGFFLGILAASLTLILI. At 681–770 the chain is on the cytoplasmic side; that stretch reads GRRQQRRRQR…PLATCDETSI (90 aa). The interval 696-725 is disordered; that stretch reads DKVGLDLGAPPSGTTSYSQDPPSPSPEDER. S718 and S720 each carry phosphoserine. The PDZ-binding motif lies at 768 to 770; the sequence is TSI.

This sequence belongs to the semaphorin family. As to quaternary structure, interacts (via PDZ-binding motif) with DLG4/SAP90 (via PDZ domain 2); this interaction may promote translocation of DLG4/SAP90 to the membrane.

It is found in the cell membrane. It localises to the postsynaptic density. Its subcellular location is the perikaryon. The protein resides in the cell projection. The protein localises to the dendrite. Probable cell surface receptor that regulates oligodendroglial precursor cell migration. Might also regulate differentiation of oligodendroglial precursor cells. Has growth cone collapse activity against retinal ganglion-cell axons. The protein is Semaphorin-4F (SEMA4F) of Homo sapiens (Human).